A 228-amino-acid chain; its full sequence is UPF0758 protein SH1266 (228 aa).

Residues 102-224 (KITSPSDVSN…YASLVEEGYF (123 aa)) form the MPN domain. Residues H173, H175, and D186 each contribute to the Zn(2+) site. The JAMM motif signature appears at 173 to 186 (HNHPSGDVTPSKED).

This sequence belongs to the UPF0758 family.

The chain is UPF0758 protein SH1266 from Staphylococcus haemolyticus (strain JCSC1435).